A 354-amino-acid polypeptide reads, in one-letter code: Protein CbrA (354 aa).

The protein belongs to the CbrA family.

This chain is Protein CbrA (cbrA), found in Escherichia coli (strain K12).